Reading from the N-terminus, the 89-residue chain is ATP synthase subunit c (89 aa).

A run of 2 helical transmembrane segments spans residues 3-23 and 53-73; these read IILGFVALACGLIVGLGAIGA and FILAGLIDAAFLIGVAIALMF.

Belongs to the ATPase C chain family. F-type ATPases have 2 components, F(1) - the catalytic core - and F(0) - the membrane proton channel. F(1) has five subunits: alpha(3), beta(3), gamma(1), delta(1), epsilon(1). F(0) has three main subunits: a(1), b(2) and c(10-14). The alpha and beta chains form an alternating ring which encloses part of the gamma chain. F(1) is attached to F(0) by a central stalk formed by the gamma and epsilon chains, while a peripheral stalk is formed by the delta and b chains.

The protein localises to the cell inner membrane. Its function is as follows. F(1)F(0) ATP synthase produces ATP from ADP in the presence of a proton or sodium gradient. F-type ATPases consist of two structural domains, F(1) containing the extramembraneous catalytic core and F(0) containing the membrane proton channel, linked together by a central stalk and a peripheral stalk. During catalysis, ATP synthesis in the catalytic domain of F(1) is coupled via a rotary mechanism of the central stalk subunits to proton translocation. In terms of biological role, key component of the F(0) channel; it plays a direct role in translocation across the membrane. A homomeric c-ring of between 10-14 subunits forms the central stalk rotor element with the F(1) delta and epsilon subunits. The chain is ATP synthase subunit c from Verminephrobacter eiseniae (strain EF01-2).